Reading from the N-terminus, the 554-residue chain is Membrane protein insertase YidC (554 aa).

Transmembrane regions (helical) follow at residues 7–24 (VLWV…DNWQ), 362–382 (VVGN…AVFF), 436–456 (LPVV…LASV), 475–495 (PFFI…SLNP), and 510–530 (PIAF…YYVV).

It belongs to the OXA1/ALB3/YidC family. Type 1 subfamily. Interacts with the Sec translocase complex via SecD. Specifically interacts with transmembrane segments of nascent integral membrane proteins during membrane integration.

The protein localises to the cell inner membrane. Functionally, required for the insertion and/or proper folding and/or complex formation of integral membrane proteins into the membrane. Involved in integration of membrane proteins that insert both dependently and independently of the Sec translocase complex, as well as at least some lipoproteins. Aids folding of multispanning membrane proteins. This is Membrane protein insertase YidC from Burkholderia vietnamiensis (strain G4 / LMG 22486) (Burkholderia cepacia (strain R1808)).